Here is a 345-residue protein sequence, read N- to C-terminus: Fe-S cluster assembly protein DRE2 (345 aa).

The segment at 11–166 is N-terminal SAM-like domain; sequence FSHSSNGVVL…SIGSSSGSSS (156 aa). The disordered stretch occupies residues 147-166; that stretch reads SKPATASSSFSIGSSSGSSS. Positions 153 to 166 are enriched in low complexity; the sequence is SSSFSIGSSSGSSS. Positions 167-210 are linker; sequence ALPLRRKLGSGASANAKKSLWATQPASANDLIDEASLLRDADFV. C220, C233, C236, and C238 together coordinate [2Fe-2S] cluster. The fe-S binding site A stretch occupies residues 220–238; it reads CDVGAGQGKKKKACKGCTC. C307, C310, C318, and C321 together coordinate [4Fe-4S] cluster. 2 short sequence motifs (cx2C motif) span residues 307–310 and 318–321; these read CGSC and CSSC. The interval 307 to 321 is fe-S binding site B; that stretch reads CGSCFLGDAFRCSSC.

The protein belongs to the anamorsin family. As to quaternary structure, monomer. Interacts with TAH18. Interacts with MIA40. Requires [2Fe-2S] cluster as cofactor. The cofactor is [4Fe-4S] cluster.

It is found in the cytoplasm. The protein localises to the mitochondrion intermembrane space. Functionally, component of the cytosolic iron-sulfur (Fe-S) protein assembly (CIA) machinery required for the maturation of extramitochondrial Fe-S proteins. Part of an electron transfer chain functioning in an early step of cytosolic Fe-S biogenesis, facilitating the de novo assembly of a [4Fe-4S] cluster on the scaffold complex CFD1-NBP35. Electrons are transferred to DRE2 from NADPH via the FAD- and FMN-containing protein TAH18. TAH18-DRE2 are also required for the assembly of the diferric tyrosyl radical cofactor of ribonucleotide reductase (RNR), probably by providing electrons for reduction during radical cofactor maturation in the catalytic small subunit RNR2. In Mycosarcoma maydis (Corn smut fungus), this protein is Fe-S cluster assembly protein DRE2.